Reading from the N-terminus, the 244-residue chain is Methylthioribulose-1-phosphate dehydratase (244 aa).

Cys89 contacts substrate. Residues His107 and His109 each coordinate Zn(2+). Glu130 serves as the catalytic Proton donor/acceptor. His192 provides a ligand contact to Zn(2+).

Belongs to the aldolase class II family. MtnB subfamily. Zn(2+) serves as cofactor.

The protein localises to the cytoplasm. It catalyses the reaction 5-(methylsulfanyl)-D-ribulose 1-phosphate = 5-methylsulfanyl-2,3-dioxopentyl phosphate + H2O. Its pathway is amino-acid biosynthesis; L-methionine biosynthesis via salvage pathway; L-methionine from S-methyl-5-thio-alpha-D-ribose 1-phosphate: step 2/6. Its function is as follows. Catalyzes the dehydration of methylthioribulose-1-phosphate (MTRu-1-P) into 2,3-diketo-5-methylthiopentyl-1-phosphate (DK-MTP-1-P). The polypeptide is Methylthioribulose-1-phosphate dehydratase (Saccharomyces cerevisiae (strain YJM789) (Baker's yeast)).